A 115-amino-acid polypeptide reads, in one-letter code: Large ribosomal subunit protein bL19 (115 aa).

The protein belongs to the bacterial ribosomal protein bL19 family.

Functionally, this protein is located at the 30S-50S ribosomal subunit interface and may play a role in the structure and function of the aminoacyl-tRNA binding site. In Brevibacillus brevis (strain 47 / JCM 6285 / NBRC 100599), this protein is Large ribosomal subunit protein bL19.